A 515-amino-acid polypeptide reads, in one-letter code: Fatty acyl-CoA reductase 1 (515 aa).

Residues 1–465 (MVSIPEYYEG…ARKHLNKLRN (465 aa)) lie on the Cytoplasmic side of the membrane. The tract at residues 451–507 (SGLPAARKHLNKLRNIRYGFNTILVILIWRIFIARSQMARNIWYFVVSLCYKFLSYF) is necessary and sufficient for PEX19-mediated localization into peroxisome membrane. Residues 466–483 (IRYGFNTILVILIWRIFI) traverse the membrane as a helical segment. The Peroxisomal portion of the chain corresponds to 484–515 (ARSQMARNIWYFVVSLCYKFLSYFRASSTMRY).

The protein belongs to the fatty acyl-CoA reductase family. In terms of assembly, interacts with PEX19; PEX19 mediates the targeting of FAR1 to peroxisomes. In terms of tissue distribution, widely expressed. Expressed in all tissues examined. Highest expression seen in preputial gland. Expressed in the brain where large quantities of ether lipids are synthesized.

The protein resides in the peroxisome membrane. The enzyme catalyses a long-chain fatty acyl-CoA + 2 NADPH + 2 H(+) = a long-chain primary fatty alcohol + 2 NADP(+) + CoA. It carries out the reaction hexadecanoyl-CoA + 2 NADPH + 2 H(+) = hexadecan-1-ol + 2 NADP(+) + CoA. The catalysed reaction is octadecanoyl-CoA + 2 NADPH + 2 H(+) = octadecan-1-ol + 2 NADP(+) + CoA. It catalyses the reaction (9Z)-octadecenoyl-CoA + 2 NADPH + 2 H(+) = (9Z)-octadecen-1-ol + 2 NADP(+) + CoA. The enzyme catalyses (9Z,12Z)-octadecadienoyl-CoA + 2 NADPH + 2 H(+) = (9Z,12Z)-octadecadien-1-ol + 2 NADP(+) + CoA. It carries out the reaction eicosanoyl-CoA + 2 NADPH + 2 H(+) = eicosan-1-ol + 2 NADP(+) + CoA. The catalysed reaction is 16-methylheptadecanoyl-CoA + 2 NADPH + 2 H(+) = 16-methylheptadecan-1-ol + 2 NADP(+) + CoA. It catalyses the reaction 18-methylnonadecanoyl-CoA + 2 NADPH + 2 H(+) = 18-methylnonadecan-1-ol + 2 NADP(+) + CoA. Functionally, catalyzes the reduction of saturated and unsaturated C16 or C18 fatty acyl-CoA to fatty alcohols. It plays an essential role in the production of ether lipids/plasmalogens which synthesis requires fatty alcohols. In parallel, it is also required for wax monoesters production since fatty alcohols also constitute a substrate for their synthesis. This chain is Fatty acyl-CoA reductase 1, found in Mus musculus (Mouse).